Reading from the N-terminus, the 157-residue chain is Transcriptional repressor NrdR (157 aa).

A zinc finger lies at 3 to 34; it reads CPFCRHPDSRVVDSRTSDDGLSIRRRRQCPEC. The ATP-cone domain occupies 46 to 136; it reads LSVIKRNGVV…VYQGFDSLDD (91 aa).

This sequence belongs to the NrdR family. It depends on Zn(2+) as a cofactor.

Negatively regulates transcription of bacterial ribonucleotide reductase nrd genes and operons by binding to NrdR-boxes. This chain is Transcriptional repressor NrdR, found in Clavibacter michiganensis subsp. michiganensis (strain NCPPB 382).